The primary structure comprises 261 residues: Ribosome biogenesis protein NSA2 (261 aa).

A compositionally biased stretch (basic and acidic residues) spans 1 to 40 (MPQNDYIERHIKQHGKRLDHEERKRKREARESHKISERAQ). Positions 1-43 (MPQNDYIERHIKQHGKRLDHEERKRKREARESHKISERAQKLT) are disordered. 2 consecutive short sequence motifs (nuclear localization signal) follow at residues 15-22 (GKRLDHEE) and 51-58 (AKKRYAEK). Positions 61–87 (MRKKIKAHEQSKVKGSSKPLDTDGDAL) are disordered.

It belongs to the eukaryotic ribosomal protein eS8 family. Ribosome biogenesis protein NSA2 subfamily. Component of the pre-66S ribosomal particle. Interacts with NOP7 and RRP1. Interacts with RSA4 (via WD repeats).

The protein localises to the nucleus. It is found in the nucleolus. In terms of biological role, involved in the biogenesis of the 60S ribosomal subunit. May play a part in the quality control of pre-60S particles. Under normal, rapid growth conditions, high levels of NSA2 would allow the progression of pre-60S particles through the ITS2 processing. This chain is Ribosome biogenesis protein NSA2 (NSA2), found in Saccharomyces cerevisiae (strain YJM789) (Baker's yeast).